A 562-amino-acid polypeptide reads, in one-letter code: MVASGFLLIASFMLVLFVLSRPLGGFLARLIEGEPFSALQKVEAGLWRCSGVKNAEMNGWQYALAILCFNLLGIVLLFVLLMTQGSLPLNPEHLPGMSWHLALNTAVSFVTNTNWQAYSGENTLSYLSQMAGLTVQNFLSAATGIAVAFALIRAFARHSATTLGNAWVDLVRITLYVLLPIALIIALIFVSQGVLQNLDGYLHITTLEGVQQTLPMGPVASQEAIKVLGTNGGGFFGANSAHPFENPTAFSNFVQMLAIFLIPCALCFAFGQVVGDNRQGHALIWAMSLIFIVAVVVVMYAELAGNPHLSPLGADSNSNMEGKESRFGILATSLYAVVTTAASCGAVNAMHDSFTALGGMIPLWLMQIGEVVFGGVGSGLYGMLLFVLLTVFIAGLMIGRTPEYLGKKIDVFDMKMTALAILVTPTIVLLGTALALCTEAGRAGILNPGAHGFSEVLYALSSAANNNGSAFAGLSVNTPFYNLLLAAAMFIGRFGVILPVLAIASSLVAKKRQPAGNGTLPTGGPLFIGLLIGTVLLVGALTFIPALALGPVAEHLQVWLAH.

12 helical membrane passes run 6–26 (FLLI…LGGF), 62–82 (YALA…VLLM), 132–152 (GLTV…FALI), 175–195 (LYVL…QGVL), 253–273 (FVQM…FGQV), 283–303 (LIWA…YAEL), 327–347 (FGIL…CGAV), 356–376 (ALGG…FGGV), 379–399 (GLYG…LMIG), 416–436 (MTAL…ALAL), 483–503 (LLLA…VLAI), and 526–546 (LFIG…FIPA).

Belongs to the KdpA family. As to quaternary structure, the system is composed of three essential subunits: KdpA, KdpB and KdpC.

The protein resides in the cell inner membrane. In terms of biological role, part of the high-affinity ATP-driven potassium transport (or Kdp) system, which catalyzes the hydrolysis of ATP coupled with the electrogenic transport of potassium into the cytoplasm. This subunit binds the periplasmic potassium ions and delivers the ions to the membrane domain of KdpB through an intramembrane tunnel. In Yersinia pseudotuberculosis serotype I (strain IP32953), this protein is Potassium-transporting ATPase potassium-binding subunit.